A 375-amino-acid polypeptide reads, in one-letter code: LIM domain-binding protein 1 (375 aa).

Disordered stretches follow at residues 248–294 and 331–375; these read PPAE…TFAL and DAAN…QASQ. The span at 266 to 282 shows a compositional bias: low complexity; sequence SGGSTMSSGGGNTNNSN. The LIM interaction domain (LID) domain occupies 300 to 339; that stretch reads DVMVVGEPTLMGGEFGDEDERLITRLENTQFDAANGIDDE.

This sequence belongs to the LDB family. In terms of assembly, forms homodimers and heterodimers. Interacts with the LIM domain of LIM/homeobox factor lhx1/lim1, and with lhx3/lim3 and lhx5/lim5. Activates lhx1/lim1 by binding. The stoichiometry of lhx1/lim1 and ldb1 is important for their function and an excess of ldb1 can inhibit lhx1/lim1 function. When bound to lhx1/lim1, escapes degradation by rnf12. The N-terminus interacts with the N-terminal region of rnf12. Post-translationally, undergoes rnf12-mediated ubiquitin-proteasome-dependent degradation. Ubiquitously expressed in the early gastrula before localizing to the dorsal region of the vegetal hemisphere, which contains the Spemann organizer. Expressed in the CNS, pronephros and tail bud in neurula and tail-bud stage embryos. Expressed in multiple adult tissues including brain, heart, lung, stomach, intestine, liver, spleen, kidney, ovary, muscle and skin.

The protein resides in the nucleus. Its function is as follows. Binds to the LIM domain of a wide variety of LIM domain-containing transcription factors. Acts as a coactivator together with otx2 to stimulate lhx1/lim1-mediated activation of the gsc promoter in the Spemann organizer. Acts synergistically with lhx1/lim1 and ssbp in axis formation. In Xenopus laevis (African clawed frog), this protein is LIM domain-binding protein 1 (ldb1).